We begin with the raw amino-acid sequence, 152 residues long: Acyl carrier protein, mitochondrial (152 aa).

A Carrier domain is found at 73–148 (KLINERVLLV…DIIKYVADKE (76 aa)). Serine 108 bears the O-(pantetheine 4'-phosphoryl)serine mark.

This sequence belongs to the acyl carrier protein (ACP) family. Complex I is composed of about 45 different subunits.

The protein resides in the mitochondrion. In terms of biological role, carrier of the growing fatty acid chain in fatty acid biosynthesis. Accessory and non-catalytic subunit of the mitochondrial membrane respiratory chain NADH dehydrogenase (Complex I), which functions in the transfer of electrons from NADH to the respiratory chain. This chain is Acyl carrier protein, mitochondrial, found in Drosophila melanogaster (Fruit fly).